Reading from the N-terminus, the 458-residue chain is tRNA modification GTPase MnmE (458 aa).

3 residues coordinate (6S)-5-formyl-5,6,7,8-tetrahydrofolate: Arg-32, Glu-89, and Lys-128. Residues 224 to 381 form the TrmE-type G domain; it reads GVRVVLAGRP…LCQRLKECAG (158 aa). A K(+)-binding site is contributed by Asn-234. Residues 234 to 239, 253 to 259, and 278 to 281 each bind GTP; these read NVGKSS, TDVPGTT, and DTAG. A Mg(2+)-binding site is contributed by Ser-238. K(+) is bound by residues Thr-253, Val-255, and Thr-258. Mg(2+) is bound at residue Thr-259. Lys-458 serves as a coordination point for (6S)-5-formyl-5,6,7,8-tetrahydrofolate.

This sequence belongs to the TRAFAC class TrmE-Era-EngA-EngB-Septin-like GTPase superfamily. TrmE GTPase family. In terms of assembly, homodimer. Heterotetramer of two MnmE and two MnmG subunits. It depends on K(+) as a cofactor.

Its subcellular location is the cytoplasm. Its function is as follows. Exhibits a very high intrinsic GTPase hydrolysis rate. Involved in the addition of a carboxymethylaminomethyl (cmnm) group at the wobble position (U34) of certain tRNAs, forming tRNA-cmnm(5)s(2)U34. In Nitrosococcus oceani (strain ATCC 19707 / BCRC 17464 / JCM 30415 / NCIMB 11848 / C-107), this protein is tRNA modification GTPase MnmE.